Reading from the N-terminus, the 269-residue chain is 4-hydroxy-tetrahydrodipicolinate reductase (269 aa).

Residues 8–13 (GVAGRM), 98–100 (GTT), and 122–125 (APNM) contribute to the NAD(+) site. The active-site Proton donor/acceptor is His156. His157 is a (S)-2,3,4,5-tetrahydrodipicolinate binding site. The active-site Proton donor is the Lys160. 166 to 167 (GT) provides a ligand contact to (S)-2,3,4,5-tetrahydrodipicolinate.

It belongs to the DapB family.

Its subcellular location is the cytoplasm. It carries out the reaction (S)-2,3,4,5-tetrahydrodipicolinate + NAD(+) + H2O = (2S,4S)-4-hydroxy-2,3,4,5-tetrahydrodipicolinate + NADH + H(+). The enzyme catalyses (S)-2,3,4,5-tetrahydrodipicolinate + NADP(+) + H2O = (2S,4S)-4-hydroxy-2,3,4,5-tetrahydrodipicolinate + NADPH + H(+). It participates in amino-acid biosynthesis; L-lysine biosynthesis via DAP pathway; (S)-tetrahydrodipicolinate from L-aspartate: step 4/4. Its function is as follows. Catalyzes the conversion of 4-hydroxy-tetrahydrodipicolinate (HTPA) to tetrahydrodipicolinate. The protein is 4-hydroxy-tetrahydrodipicolinate reductase of Chromohalobacter salexigens (strain ATCC BAA-138 / DSM 3043 / CIP 106854 / NCIMB 13768 / 1H11).